Consider the following 634-residue polypeptide: Threonine--tRNA ligase (634 aa).

One can recognise a TGS domain in the interval 1 to 61 (MISLKFPNNE…SESGEFRLYT (61 aa)). Residues 242–532 (DHRKIGQELD…LIEHYAGAFP (291 aa)) are catalytic. Residues Cys-333, His-384, and His-509 each contribute to the Zn(2+) site.

Belongs to the class-II aminoacyl-tRNA synthetase family. As to quaternary structure, homodimer. Zn(2+) serves as cofactor.

It localises to the cytoplasm. It catalyses the reaction tRNA(Thr) + L-threonine + ATP = L-threonyl-tRNA(Thr) + AMP + diphosphate + H(+). Catalyzes the attachment of threonine to tRNA(Thr) in a two-step reaction: L-threonine is first activated by ATP to form Thr-AMP and then transferred to the acceptor end of tRNA(Thr). Also edits incorrectly charged L-seryl-tRNA(Thr). This chain is Threonine--tRNA ligase, found in Carboxydothermus hydrogenoformans (strain ATCC BAA-161 / DSM 6008 / Z-2901).